The chain runs to 508 residues: Photosystem II CP47 reaction center protein (508 aa).

A run of 6 helical transmembrane segments spans residues 21-36 (AVHIMHTALVSGWAGS), 101-115 (IILSGLLFLAAIWHW), 140-156 (GIHLFLSGLLCFGFGAF), 203-218 (IAAGILGILAGLFHLS), 237-252 (VLSSSIAAVFFAAFIV), and 457-472 (CFALLFFFGHIWHGAR).

It belongs to the PsbB/PsbC family. PsbB subfamily. As to quaternary structure, PSII is composed of 1 copy each of membrane proteins PsbA, PsbB, PsbC, PsbD, PsbE, PsbF, PsbH, PsbI, PsbJ, PsbK, PsbL, PsbM, PsbT, PsbX, PsbY, PsbZ, Psb30/Ycf12, at least 3 peripheral proteins of the oxygen-evolving complex and a large number of cofactors. It forms dimeric complexes. Binds multiple chlorophylls. PSII binds additional chlorophylls, carotenoids and specific lipids. is required as a cofactor.

Its subcellular location is the plastid. It is found in the chloroplast thylakoid membrane. Its function is as follows. One of the components of the core complex of photosystem II (PSII). It binds chlorophyll and helps catalyze the primary light-induced photochemical processes of PSII. PSII is a light-driven water:plastoquinone oxidoreductase, using light energy to abstract electrons from H(2)O, generating O(2) and a proton gradient subsequently used for ATP formation. In Chara vulgaris (Common stonewort), this protein is Photosystem II CP47 reaction center protein.